A 272-amino-acid chain; its full sequence is Dermonecrotic toxin LvSicTox-alphaIC1bv (272 aa).

His-5 is an active-site residue. 2 residues coordinate Mg(2+): Glu-25 and Asp-27. His-41 functions as the Nucleophile in the catalytic mechanism. Cystine bridges form between Cys-45–Cys-51 and Cys-47–Cys-189. Asp-84 lines the Mg(2+) pocket.

This sequence belongs to the arthropod phospholipase D family. Class II subfamily. The cofactor is Mg(2+). As to expression, expressed by the venom gland.

It localises to the secreted. The catalysed reaction is an N-(acyl)-sphingosylphosphocholine = an N-(acyl)-sphingosyl-1,3-cyclic phosphate + choline. The enzyme catalyses an N-(acyl)-sphingosylphosphoethanolamine = an N-(acyl)-sphingosyl-1,3-cyclic phosphate + ethanolamine. It carries out the reaction a 1-acyl-sn-glycero-3-phosphocholine = a 1-acyl-sn-glycero-2,3-cyclic phosphate + choline. It catalyses the reaction a 1-acyl-sn-glycero-3-phosphoethanolamine = a 1-acyl-sn-glycero-2,3-cyclic phosphate + ethanolamine. Functionally, dermonecrotic toxins cleave the phosphodiester linkage between the phosphate and headgroup of certain phospholipids (sphingolipid and lysolipid substrates), forming an alcohol (often choline) and a cyclic phosphate. This toxin acts on sphingomyelin (SM). It may also act on ceramide phosphoethanolamine (CPE), lysophosphatidylcholine (LPC) and lysophosphatidylethanolamine (LPE), but not on lysophosphatidylserine (LPS), and lysophosphatidylglycerol (LPG). It acts by transphosphatidylation, releasing exclusively cyclic phosphate products as second products. Induces dermonecrosis, hemolysis, increased vascular permeability, edema, inflammatory response, and platelet aggregation. This chain is Dermonecrotic toxin LvSicTox-alphaIC1bv, found in Loxosceles variegata (Recluse spider).